A 75-amino-acid polypeptide reads, in one-letter code: ATP synthase subunit c (75 aa).

Helical transmembrane passes span Phe8–Ile28 and Ala54–Val74.

This sequence belongs to the ATPase C chain family. As to quaternary structure, F-type ATPases have 2 components, F(1) - the catalytic core - and F(0) - the membrane proton channel. F(1) has five subunits: alpha(3), beta(3), gamma(1), delta(1), epsilon(1). F(0) has three main subunits: a(1), b(2) and c(10-14). The alpha and beta chains form an alternating ring which encloses part of the gamma chain. F(1) is attached to F(0) by a central stalk formed by the gamma and epsilon chains, while a peripheral stalk is formed by the delta and b chains.

Its subcellular location is the cell inner membrane. Its function is as follows. F(1)F(0) ATP synthase produces ATP from ADP in the presence of a proton or sodium gradient. F-type ATPases consist of two structural domains, F(1) containing the extramembraneous catalytic core and F(0) containing the membrane proton channel, linked together by a central stalk and a peripheral stalk. During catalysis, ATP synthesis in the catalytic domain of F(1) is coupled via a rotary mechanism of the central stalk subunits to proton translocation. Key component of the F(0) channel; it plays a direct role in translocation across the membrane. A homomeric c-ring of between 10-14 subunits forms the central stalk rotor element with the F(1) delta and epsilon subunits. This is ATP synthase subunit c from Neorickettsia sennetsu (strain ATCC VR-367 / Miyayama) (Ehrlichia sennetsu).